We begin with the raw amino-acid sequence, 1429 residues long: Autophagy-related protein 11 (1429 aa).

A disordered region spans residues 71–99; sequence TQRSQPGASSPPLSELPLPRYNAHTPPNS. Residues 80–89 show a composition bias toward low complexity; it reads SPPLSELPLP. Coiled coils occupy residues 143-173, 553-590, 632-815, and 851-989; these read VMLRCLDAAVANLENAVKGLENKYVELKEWS, DDLLRSLQADKTRLESKLKTAESRVRRLEDLLHRQTQA, LETL…LEDI, and EGDM…RLES. Positions 1024–1061 are disordered; the sequence is DGTMHIQRTPRSERSLATTANPNDSDPSSSLRRSSTLN. The segment covering 1042–1061 has biased composition (low complexity); sequence TANPNDSDPSSSLRRSSTLN. Positions 1105–1143 form a coiled coil; the sequence is ADAVYRRVKDVEHMARKLQREARAYREKAHSFQKEAHDK. Residues 1209–1229 are compositionally biased toward basic and acidic residues; it reads SKSLQHDQAGETRKDGARGET. Disordered stretches follow at residues 1209–1241 and 1336–1429; these read SKSLQHDQAGETRKDGARGETESLDDDENDNPF and SSRG…LIGP. A compositionally biased stretch (acidic residues) spans 1230-1239; the sequence is ESLDDDENDN. Composition is skewed to polar residues over residues 1345–1372 and 1383–1393; these read ASETNSLRAVPADNNSSAPTNAAQQHMS and QETPQQTNSIS.

It belongs to the ATG11 family. In terms of assembly, homodimer.

It localises to the preautophagosomal structure membrane. The protein resides in the vacuole membrane. In terms of biological role, involved in cytoplasm to vacuole transport (Cvt), pexophagy, mitophagy and nucleophagy. Recruits mitochondria for their selective degradation via autophagy (mitophagy) during starvation. Works as scaffold proteins that recruit ATG proteins to the pre-autophagosome (PAS), the site of vesicle/autophagosome formation. Required for the Cvt vesicles completion. In Neurospora crassa (strain ATCC 24698 / 74-OR23-1A / CBS 708.71 / DSM 1257 / FGSC 987), this protein is Autophagy-related protein 11 (apg-8).